Here is a 435-residue protein sequence, read N- to C-terminus: tRNA(Ile)-lysidine synthase (435 aa).

Residue 24–29 (SGGLDS) coordinates ATP.

This sequence belongs to the tRNA(Ile)-lysidine synthase family.

It localises to the cytoplasm. The catalysed reaction is cytidine(34) in tRNA(Ile2) + L-lysine + ATP = lysidine(34) in tRNA(Ile2) + AMP + diphosphate + H(+). In terms of biological role, ligates lysine onto the cytidine present at position 34 of the AUA codon-specific tRNA(Ile) that contains the anticodon CAU, in an ATP-dependent manner. Cytidine is converted to lysidine, thus changing the amino acid specificity of the tRNA from methionine to isoleucine. This is tRNA(Ile)-lysidine synthase from Chromobacterium violaceum (strain ATCC 12472 / DSM 30191 / JCM 1249 / CCUG 213 / NBRC 12614 / NCIMB 9131 / NCTC 9757 / MK).